Reading from the N-terminus, the 1291-residue chain is Capping protein-inhibiting regulator of actin dynamics (1291 aa).

Phosphoserine is present on residues Ser-7 and Ser-28. Disordered stretches follow at residues 48–71 (KFGQ…SSEE), 84–137 (QQDI…AGTI), 159–221 (HKLA…HEEK), 234–253 (KCKR…EQRR), 267–663 (QELL…ASHA), and 701–1238 (LGLS…TSVT). Position 132 is a phosphoserine (Ser-132). The span at 159–176 (HKLAVKPKNQRVSRKHRW) shows a compositional bias: basic residues. Over residues 184–199 (EPGSFESQSSLDQNGQ) the composition is skewed to polar residues. Residues 201–221 (GEDKHIWHGEEPEPLESHEEK) show a composition bias toward basic and acidic residues. Over residues 270–291 (LEEEEEGEEEEEVKEEGEEGEE) the composition is skewed to acidic residues. Composition is skewed to basic and acidic residues over residues 302–318 (PPEE…RCTE), 326–461 (DPAR…EDAK), and 470–483 (EAKR…KETP). The interval 324-560 (ADDPARLEAE…DLDAHCGGVD (237 aa)) is required for interaction with actin-capping proteins. Thr-482 carries the post-translational modification Phosphothreonine. 2 positions are modified to phosphoserine: Ser-493 and Ser-510. Basic and acidic residues-rich tracts occupy residues 506–527 (ADQR…REDL) and 534–543 (EIAEEPRGEG). The segment covering 580–593 (EGTPAPEENEATAA) has biased composition (low complexity). A compositionally biased stretch (basic and acidic residues) spans 594-612 (DIDRKVEELRWQEVDERQT). A Phosphoserine modification is found at Ser-636. Position 639 is a phosphothreonine (Thr-639). Residues 749 to 778 (KNSEGDQRGDREPARAGDEPVPRARCDSRG) are compositionally biased toward basic and acidic residues. The residue at position 867 (Ser-867) is a Phosphoserine. Over residues 875–888 (TESTTTLDSETTSD) the composition is skewed to low complexity. Residues 969–983 (QERKPALSPRKDSAE) are compositionally biased toward basic and acidic residues. Thr-1033 carries the phosphothreonine modification. A Phosphoserine modification is found at Ser-1037. The segment covering 1056-1070 (GKLDSEPSETAKESS) has biased composition (basic and acidic residues). Ser-1076 bears the Phosphoserine mark. Composition is skewed to basic and acidic residues over residues 1081–1098 (EELK…EKKP), 1117–1141 (TGRK…EKVE), and 1157–1182 (GFRE…KLSK). 2 stretches are compositionally biased toward polar residues: residues 1183–1197 (ETVS…SRAS) and 1229–1238 (KSNTLPTSVT).

In terms of assembly, directly interacts with actin-capping proteins CAPZA1, CAPZA2 and CAPZB; this interaction decreases the binding of capping proteins to actin. As to expression, expressed in the small intestine (at protein level).

It is found in the cytoplasm. The protein resides in the cytosol. Functionally, involved in epithelial cell integrity by acting on the dynamics of the actin cytoskeleton. Positively regulates the actin polymerization, by inhibiting the interaction of actin-capping proteins with actin. In Mus musculus (Mouse), this protein is Capping protein-inhibiting regulator of actin dynamics.